Reading from the N-terminus, the 649-residue chain is Drebrin (649 aa).

An N-acetylalanine modification is found at A2. Residues G3–S134 enclose the ADF-H domain. A phosphoserine mark is found at S141 and S142. Composition is skewed to basic and acidic residues over residues Q208–R236 and D288–E298. Disordered regions lie at residues Q208 to D420, D477 to T502, and E538 to V620. 2 positions are modified to phosphothreonine: T331 and T335. A compositionally biased stretch (polar residues) spans P334–V348. 3 positions are modified to phosphoserine: S337, S339, and S345. T346 is modified (phosphothreonine). Pro residues predominate over residues Q363–A374. Phosphoserine is present on S416. T497 carries the post-translational modification Phosphothreonine. Polar residues predominate over residues N582 to S594. Residue S601 is modified to Phosphoserine.

As to quaternary structure, interacts with RUFY3. Interacts with CXCR4; this interaction is enhanced by antigenic stimulation. Interacts (via ADF-H domain) with ZMYND8 (via N-terminus); the interaction leads to sequestering of ZMYND8 in the cytoplasm. Expressed in the brain, with expression in the molecular layer of the dentate gyrus, stratum pyramidale, and stratum radiatum of the hippocampus (at protein level). Also expressed in the terminal varicosities distributed along dendritic trees of pyramidal cells in CA4 and CA3 of the hippocampus (at protein level). Expressed in pyramidal cells in CA2, CA1 and the subiculum of the hippocampus (at protein level). Expressed in peripheral blood lymphocytes, including T-cells (at protein level). Expressed in the brain. Expressed in the heart, placenta, lung, skeletal muscle, kidney, pancreas, skin fibroblasts, gingival fibroblasts and bone-derived cells.

The protein resides in the cytoplasm. The protein localises to the cell projection. It is found in the dendrite. Its subcellular location is the cell cortex. It localises to the cell junction. The protein resides in the growth cone. Actin cytoskeleton-organizing protein that plays a role in the formation of cell projections. Required for actin polymerization at immunological synapses (IS) and for the recruitment of the chemokine receptor CXCR4 to IS. Plays a role in dendritic spine morphogenesis and organization, including the localization of the dopamine receptor DRD1 to the dendritic spines. Involved in memory-related synaptic plasticity in the hippocampus. The protein is Drebrin (DBN1) of Homo sapiens (Human).